Reading from the N-terminus, the 269-residue chain is Undecaprenyl-diphosphatase (269 aa).

A run of 8 helical transmembrane segments spans residues 1–21 (MSIF…FLPI), 39–59 (LPIL…CTVF), 86–106 (LMMI…GLLL), 112–132 (TIDI…LIAS), 144–164 (VTLL…IPGI), 184–204 (AGEF…ILEI), 210–230 (LLAG…FVVG), and 249–269 (FAFY…GFAG).

Belongs to the UppP family.

The protein localises to the cell inner membrane. It carries out the reaction di-trans,octa-cis-undecaprenyl diphosphate + H2O = di-trans,octa-cis-undecaprenyl phosphate + phosphate + H(+). In terms of biological role, catalyzes the dephosphorylation of undecaprenyl diphosphate (UPP). Confers resistance to bacitracin. The chain is Undecaprenyl-diphosphatase from Treponema denticola (strain ATCC 35405 / DSM 14222 / CIP 103919 / JCM 8153 / KCTC 15104).